We begin with the raw amino-acid sequence, 95 residues long: RING finger protein Z (95 aa).

The N-myristoyl glycine; by host moiety is linked to residue Gly-2. The segment at 38–74 adopts an RING-type; atypical zinc-finger fold; that stretch reads CKSCWFANKGLIKCSNHYLCLKCLTAMLSRSDYCGIC. Positions 88-91 match the PTAP/PSAP motif motif; sequence PSAP.

The protein belongs to the arenaviridae Z protein family. As to quaternary structure, interacts with protein NP; this interaction probably directs the encapsidated genome to budding sites. Interacts (via RING domain) with polymerase L; this interaction inhibits viral transcription and replication, Z partially blocks the product exit tunnel for the releasing nascent RNA product. Interacts with the glycoprotein complex; this interaction plays a role in virion budding. Interacts with host eIF4E; this interaction results in eIF4E reduced affinity for its substrate, the 5'-m7 G cap structure. Interacts (via late-budding domain) with host TSG101; this interaction is essential for budding and release of viral particles. Interacts with host RPLP0; this interaction may serve to load ribosome-like particles inside the virion. Interacts with host PML; this interaction induces PML bodies redistribution in the cytoplasm upon viral infection. In terms of processing, myristoylation is required for the role of RING finger protein Z in assembly and budding.

The protein resides in the virion. It localises to the host cytoplasm. Its subcellular location is the host perinuclear region. The protein localises to the host cell membrane. Functionally, plays a crucial role in virion assembly and budding. Expressed late in the virus life cycle, it acts as an inhibitor of viral transcription and RNA synthesis by interacting with the viral polymerase L. Presumably recruits the NP encapsidated genome to cellular membranes at budding sites via direct interaction with NP. Plays critical roles in the final steps of viral release by interacting with host TSG101, a member of the vacuolar protein-sorting pathway and using other cellular host proteins involved in vesicle formation pathway. The budding of the virus progeny occurs after association of protein Z with the viral glycoprotein complex SSP-GP1-GP2 at the cell periphery, step that requires myristoylation of protein Z. Also selectively represses protein production by associating with host eIF4E. In cell-based minigenome assay, has an inhibitory effect on the ribonucleoprotein machinery (vRNP), which is responsible for the replication and transcription of the viral genome. This chain is RING finger protein Z, found in Bear Canyon mammarenavirus (isolate Mouse/United States/AV A0070039/2000) (BCNV).